Reading from the N-terminus, the 206-residue chain is MELKLLQADGQLGTGVSASPEVFGRDYNEALVHQIVVAYQANARSGNRKQKDREEVKHTTKKPWRQKGTGRARAGMSSSPLWRGGGRIFPNSPEENFSQKVNKKMYRAGMRSIYSQLAREGRINVVDSLSVDAPKTKLLADKFRAMGLDSVLVITDNLDENLFLASRNLAHVLVVEPRHADPLSLVHYKKVLVTKAAVAQIEELLK.

Residues 43-78 (ARSGNRKQKDREEVKHTTKKPWRQKGTGRARAGMSS) are disordered. Residues 49 to 58 (KQKDREEVKH) are compositionally biased toward basic and acidic residues. Residues 59–70 (TTKKPWRQKGTG) are compositionally biased toward basic residues.

Belongs to the universal ribosomal protein uL4 family. In terms of assembly, part of the 50S ribosomal subunit.

Its function is as follows. One of the primary rRNA binding proteins, this protein initially binds near the 5'-end of the 23S rRNA. It is important during the early stages of 50S assembly. It makes multiple contacts with different domains of the 23S rRNA in the assembled 50S subunit and ribosome. In terms of biological role, forms part of the polypeptide exit tunnel. This chain is Large ribosomal subunit protein uL4, found in Ralstonia nicotianae (strain ATCC BAA-1114 / GMI1000) (Ralstonia solanacearum).